Here is a 114-residue protein sequence, read N- to C-terminus: Protein ORF3 (114 aa).

Hydrophobic regions lie at residues 6 to 22 and 33 to 53; these read CALGLFCCCSSCFCLCC and AVVGGAAAVPAVVSGVTGLIL. The interval 28 to 68 is interaction with host HPX; that stretch reads VSRLAAVVGGAAAVPAVVSGVTGLILSPSQSPIFIQPTPLP. Positions 72 to 114 are homodimerization, and interaction with host AMBP/bikunin; the sequence is PLRPGLDLAFANQPGHLAPLGEIRPSAPPLPPVADLPQPGLRR. The interval 91–114 is disordered; it reads LGEIRPSAPPLPPVADLPQPGLRR. Positions 95-104 are interaction with host SRC, HCK, FYN, PIK3R3 and GRB2; sequence RPSAPPLPPV. The short motif at 96–99 is the PTAP/PSAP motif element; the sequence is PSAP.

This sequence belongs to the hepevirus ORF3 protein family. Forms homooligomers. Interacts with host SRC, HCK, FYN, PIK3R3 and GRB2 (via SH3 domain); binding does not activate the kinases. Interacts with host AMBP/bikunin and AMBP/alpha-1-microglobulin peptides. Interacts with host HPX/hemopexin. Interacts (when phosphorylated) with capsid protein ORF2. Interacts with host TSG101; this interaction plays a role in viral release from the host cell. Interacts with host SIRPA; this interaction down-regulates the phosphorylation of host IRF3. In terms of processing, palmitoylated in the N-terminus.

Its subcellular location is the host endoplasmic reticulum membrane. It is found in the host cytoplasm. It localises to the host cytoskeleton. The protein resides in the virion. The protein localises to the host cell membrane. Functionally, small multifunctional phosphoprotein involved in virion morphogenesis, egress and counteracting host innate immunity. Plays critical roles in the final steps of viral release by interacting with host TSG101, a member of the vacuolar protein-sorting pathway and using other cellular host proteins involved in vesicle formation pathway. Also acts as a viroporin and forms ion conductive pores allowing viral particle release. Impairs the generation of type I interferon by down-regulating host TLR3 and TLR7 as well as their downstream signaling pathways. Down-regulates the phosphorylation of host IRF3 via the interaction with host SIRP-alpha, thereby inhibiting IFN-I expression. Interacts with host microtubules. The protein is Protein ORF3 of Hepatitis E virus genotype 2 (isolate Human/Mexico) (HEV-2).